Consider the following 295-residue polypeptide: Cytidine deaminase (295 aa).

CMP/dCMP-type deaminase domains are found at residues 48–168 (TDNQ…FGPS) and 187–295 (EDDD…YLSL). 89-91 (NME) contacts substrate. His-102 lines the Zn(2+) pocket. Glu-104 (proton donor) is an active-site residue. 2 residues coordinate Zn(2+): Cys-129 and Cys-132.

Belongs to the cytidine and deoxycytidylate deaminase family. Homodimer. The cofactor is Zn(2+).

The catalysed reaction is cytidine + H2O + H(+) = uridine + NH4(+). The enzyme catalyses 2'-deoxycytidine + H2O + H(+) = 2'-deoxyuridine + NH4(+). This enzyme scavenges exogenous and endogenous cytidine and 2'-deoxycytidine for UMP synthesis. The protein is Cytidine deaminase of Vibrio vulnificus (strain YJ016).